The chain runs to 112 residues: Nitrogen regulatory protein P-II 1 (112 aa).

O-UMP-tyrosine is present on Tyr51.

It belongs to the P(II) protein family. In terms of assembly, homotrimer. In terms of processing, uridylylated/deuridylylated by GlnD.

In terms of biological role, P-II indirectly controls the transcription of the glutamine synthetase gene (GlnA). P-II prevents NR-II-catalyzed conversion of NR-I to NR-I-phosphate, the transcriptional activator of GlnA. When P-II is uridylylated to P-II-UMP, these events are reversed. When the ratio of Gln to 2-ketoglutarate decreases, P-II is uridylylated to P-II-UMP, which causes the deadenylation of glutamine synthetase by GlnE, so activating the enzyme. This Escherichia coli O157:H7 protein is Nitrogen regulatory protein P-II 1 (glnB).